We begin with the raw amino-acid sequence, 379 residues long: 3-dehydroquinate synthase (379 aa).

It belongs to the archaeal-type DHQ synthase family.

The catalysed reaction is 2-amino-2,3,7-trideoxy-D-lyxo-hept-6-ulosonate + NAD(+) + H2O = 3-dehydroquinate + NH4(+) + NADH + H(+). Its function is as follows. Catalyzes the oxidative deamination and cyclization of 2-amino-3,7-dideoxy-D-threo-hept-6-ulosonic acid (ADH) to yield 3-dehydroquinate (DHQ), which is fed into the canonical shikimic pathway of aromatic amino acid biosynthesis. This Methanococcoides burtonii (strain DSM 6242 / NBRC 107633 / OCM 468 / ACE-M) protein is 3-dehydroquinate synthase.